The sequence spans 71 residues: uncharacterized protein (71 aa).

A signal peptide spans 1–21; the sequence is MGVGLHGDHVGGELNSANAFT.

This is an uncharacterized protein from Haemophilus influenzae (strain ATCC 51907 / DSM 11121 / KW20 / Rd).